Consider the following 115-residue polypeptide: Large ribosomal subunit protein uL18 (115 aa).

A disordered region spans residues 1 to 24 (MISKPDKNKLRQKRHTRVRGKISG). The span at 10–20 (LRQKRHTRVRG) shows a compositional bias: basic residues.

It belongs to the universal ribosomal protein uL18 family. In terms of assembly, part of the 50S ribosomal subunit; part of the 5S rRNA/L5/L18/L25 subcomplex. Contacts the 5S and 23S rRNAs.

Its function is as follows. This is one of the proteins that bind and probably mediate the attachment of the 5S RNA into the large ribosomal subunit, where it forms part of the central protuberance. The chain is Large ribosomal subunit protein uL18 from Lactococcus lactis subsp. cremoris (strain MG1363).